A 405-amino-acid chain; its full sequence is CMP-sialic acid transporter 5 (405 aa).

At 1–43 the chain is on the cytoplasmic side; the sequence is MQRNGVVECSVCRSRLVVPSPRSVSRAYDKHRSKISSKFRALN. The helical transmembrane segment at 44 to 64 threads the bilayer; it reads VLLVVGDCILVGLQPILVFMS. At 65–74 the chain is on the lumenal side; the sequence is KVDGKFQFSP. The chain crosses the membrane as a helical span at residues 75 to 95; sequence ISVNFLTEVTKVVFAIVMLII. Residues 96–121 are Cytoplasmic-facing; it reads QSRKQKVGEKPLLARSTFIQAARNNA. A helical membrane pass occupies residues 122–142; sequence LLAVPALLYAINNYLKFIMQL. Over 143–147 the chain is Lumenal; the sequence is YFNPS. A helical transmembrane segment spans residues 148-168; that stretch reads TVKMLSNLKVLVIAVLLKFIM. Residues 169–171 lie on the Cytoplasmic side of the membrane; sequence KRR. The chain crosses the membrane as a helical span at residues 172-192; that stretch reads FSVIQWEALALLLIGISINQL. The Lumenal portion of the chain corresponds to 193 to 200; the sequence is RTVPAGNT. Residues 201-221 form a helical membrane-spanning segment; the sequence is AFGLPVTAIAYIYTLIFVTVP. The Cytoplasmic segment spans residues 222-244; the sequence is SLASVYNEYALKSQYDTSIYLQN. Residues 245-265 form a helical membrane-spanning segment; sequence LFLYGYGAIFNFLGILGTALF. Residues 266-281 are Lumenal-facing; it reads QGPESFNILRGHSRAT. Residues 282 to 302 form a helical membrane-spanning segment; sequence MFLICNNAAQGILSSFFFKYA. Residues 303-322 lie on the Cytoplasmic side of the membrane; sequence DTILKKYSSTVATIFTGLAS. Residues 323-343 traverse the membrane as a helical segment; it reads AAFLGHTLTINFLLGISVVFI. At 344-405 the chain is on the lumenal side; sequence SMHQFFSPLA…TDERQPLLPT (62 aa). Positions 368–405 are disordered; that stretch reads DTQNHRSSESSFVNMTAGAAEDASHRIGTDERQPLLPT. Positions 389-405 are enriched in basic and acidic residues; sequence DASHRIGTDERQPLLPT.

Belongs to the nucleotide-sugar transporter family. CMP-Sialate:CMP antiporter (TC 2.A.7.12) subfamily.

It is found in the golgi apparatus membrane. In terms of biological role, sugar transporter involved in the transport of CMP-sialic acid from the cytoplasm into the Golgi. May transport important nucleotide sugars such as CMP-Kdo (2-keto-3-deoxy-D-manno-octulosonic acid) in physiological conditions. The sequence is that of CMP-sialic acid transporter 5 from Oryza sativa subsp. japonica (Rice).